Reading from the N-terminus, the 305-residue chain is Putative lipid kinase USA300HOU_0749 (305 aa).

A DAGKc domain is found at 3–139; the sequence is NKYTHGVLFY…YDVIKINNQY (137 aa). ATP contacts are provided by residues serine 44, 74 to 80, and threonine 101; that span reads GDGTVNE. Serine 220, aspartate 223, and glutamate 225 together coordinate Mg(2+). Glutamate 281 acts as the Proton acceptor in catalysis.

This sequence belongs to the diacylglycerol/lipid kinase family. It depends on Mg(2+) as a cofactor.

Its function is as follows. May catalyze the ATP-dependent phosphorylation of lipids other than diacylglycerol (DAG). The protein is Putative lipid kinase USA300HOU_0749 of Staphylococcus aureus (strain USA300 / TCH1516).